Consider the following 319-residue polypeptide: Acetyl-coenzyme A carboxylase carboxyl transferase subunit alpha (319 aa).

One can recognise a CoA carboxyltransferase C-terminal domain in the interval 35 to 296; sequence NIDEEVHRLR…KAQLLEDLAD (262 aa).

Belongs to the AccA family. Acetyl-CoA carboxylase is a heterohexamer composed of biotin carboxyl carrier protein (AccB), biotin carboxylase (AccC) and two subunits each of ACCase subunit alpha (AccA) and ACCase subunit beta (AccD).

It localises to the cytoplasm. The catalysed reaction is N(6)-carboxybiotinyl-L-lysyl-[protein] + acetyl-CoA = N(6)-biotinyl-L-lysyl-[protein] + malonyl-CoA. It participates in lipid metabolism; malonyl-CoA biosynthesis; malonyl-CoA from acetyl-CoA: step 1/1. In terms of biological role, component of the acetyl coenzyme A carboxylase (ACC) complex. First, biotin carboxylase catalyzes the carboxylation of biotin on its carrier protein (BCCP) and then the CO(2) group is transferred by the carboxyltransferase to acetyl-CoA to form malonyl-CoA. The chain is Acetyl-coenzyme A carboxylase carboxyl transferase subunit alpha from Salmonella dublin (strain CT_02021853).